The chain runs to 662 residues: Methyl-accepting chemotaxis protein McpB (662 aa).

At 1–16 (MKTFINWLKKPSISKK) the chain is on the cytoplasmic side. A helical membrane pass occupies residues 17–37 (LIVSFIAILIIPILILEFSSY). At 38-282 (RSASGKLDQE…IKDASKSVLT (245 aa)) the chain is on the extracellular side. The Cache domain occupies 153 to 229 (VTDPYVAASD…KAGEKLSGDW (77 aa)). Residues 283–303 (TGMIVLIASIVAGGILILFIV) form a helical membrane-spanning segment. Residues 304 to 356 (RSITKPLKRLVQSSKTISRGDLTETIEIHSKDELGELGESFNEMGQSLRSLIS) enclose the HAMP domain. At 304 to 662 (RSITKPLKRL…RDLTKQFKIE (359 aa)) the chain is on the cytoplasmic side. Q371 and Q595 each carry glutamate methyl ester (Gln). A Methyl-accepting transducer domain is found at 375–611 (SAGQTSKATE…HVSAAVSGIA (237 aa)). Glutamate methyl ester (Glu) is present on residues E630 and E637.

The protein belongs to the methyl-accepting chemotaxis (MCP) protein family. Interacts with FloT. Post-translationally, some glutamine residues are deamidated to glutamate by CheD and subsequently methylated. In terms of processing, the demethylation is selective. Gln-371 is demethylated only upon asparagine addition whereas Glu-637 is demethylated only upon asparagine removal. Glu-630 appears indiscriminate and is demethylated upon both addition and removal of asparagine.

The protein localises to the cell membrane. Its subcellular location is the membrane raft. In terms of biological role, chemotactic-signal transducers respond to changes in the concentration of attractants and repellents in the environment, transduce a signal from the outside to the inside of the cell, and facilitate sensory adaptation through the variation of the level of methylation. All amino acids serve as attractants in B.subtilis, they appear to cause an increase in the turnover methyl groups, leading to methylation of an unidentified acceptor, while repellents have been shown to cause a decrease in methyl group turnover. The methyl groups are added by a methyltransferase and removed by a methylesterase. McpB is required for taxis towards asparagine, aspartate, glutamine, and histidine. The protein is Methyl-accepting chemotaxis protein McpB (mcpB) of Bacillus subtilis (strain 168).